A 290-amino-acid chain; its full sequence is Nucleotide-binding protein Sde_3181 (290 aa).

8 to 15 (GRSGSGKT) is an ATP binding site. A GTP-binding site is contributed by 60–63 (DARN).

The protein belongs to the RapZ-like family.

Functionally, displays ATPase and GTPase activities. The polypeptide is Nucleotide-binding protein Sde_3181 (Saccharophagus degradans (strain 2-40 / ATCC 43961 / DSM 17024)).